The primary structure comprises 283 residues: Thymidylate synthase (283 aa).

Arg22 contacts dUMP. Cys160 acts as the Nucleophile in catalysis. DUMP contacts are provided by residues 180–183 (RSCD), Asn191, and 221–223 (HIY). Asp183 provides a ligand contact to (6R)-5,10-methylene-5,6,7,8-tetrahydrofolate. Ser282 is a binding site for (6R)-5,10-methylene-5,6,7,8-tetrahydrofolate.

It belongs to the thymidylate synthase family. Bacterial-type ThyA subfamily. As to quaternary structure, homodimer.

Its subcellular location is the cytoplasm. It catalyses the reaction dUMP + (6R)-5,10-methylene-5,6,7,8-tetrahydrofolate = 7,8-dihydrofolate + dTMP. Its pathway is pyrimidine metabolism; dTTP biosynthesis. Functionally, catalyzes the reductive methylation of 2'-deoxyuridine-5'-monophosphate (dUMP) to 2'-deoxythymidine-5'-monophosphate (dTMP) while utilizing 5,10-methylenetetrahydrofolate (mTHF) as the methyl donor and reductant in the reaction, yielding dihydrofolate (DHF) as a by-product. This enzymatic reaction provides an intracellular de novo source of dTMP, an essential precursor for DNA biosynthesis. This Haemophilus influenzae (strain ATCC 51907 / DSM 11121 / KW20 / Rd) protein is Thymidylate synthase.